Consider the following 901-residue polypeptide: Protein translocase subunit SecA (901 aa).

ATP is bound by residues Gln87, 105–109, and Asp512; that span reads GEGKT. Zn(2+) is bound by residues Cys885, Cys887, Cys896, and His897.

The protein belongs to the SecA family. Monomer and homodimer. Part of the essential Sec protein translocation apparatus which comprises SecA, SecYEG and auxiliary proteins SecDF-YajC and YidC. Zn(2+) serves as cofactor.

It is found in the cell inner membrane. It localises to the cytoplasm. It catalyses the reaction ATP + H2O + cellular proteinSide 1 = ADP + phosphate + cellular proteinSide 2.. Part of the Sec protein translocase complex. Interacts with the SecYEG preprotein conducting channel. Has a central role in coupling the hydrolysis of ATP to the transfer of proteins into and across the cell membrane, serving both as a receptor for the preprotein-SecB complex and as an ATP-driven molecular motor driving the stepwise translocation of polypeptide chains across the membrane. This is Protein translocase subunit SecA from Salmonella schwarzengrund (strain CVM19633).